A 340-amino-acid chain; its full sequence is MTDHALLLANLGSPASTEVADVRRYLNQFLMDPYVIDLPWPLRRLLVSLILIKRPAASAHAYASIWWDEGSPLVVLSRRLQEAMKTHWSHGPVELAMRYGEPSIEATLQRLADQGVRQVTLAPLYPQFADSTTTTVIEEAKRVVRQRSLDLRFSVLPPFYDQPEYLDALVASAKPYLEQGFDHLLLSFHGLPERHLHKLDPSGHCLKGDDCCRTASPAVLATCYRAQCLRSAELFAERMGLRPEQWSVSFQSRLGRAKWIEPYTETRLDELAAQGVKKLLVMCPAFVADCIETLEEIGDRGREQFVEAGGESLQLVPCLNDHPDWVAALKVLCERAPQAL.

Fe cation-binding residues include His-189 and Glu-292.

Belongs to the ferrochelatase family.

The protein localises to the cytoplasm. It catalyses the reaction heme b + 2 H(+) = protoporphyrin IX + Fe(2+). The protein operates within porphyrin-containing compound metabolism; protoheme biosynthesis; protoheme from protoporphyrin-IX: step 1/1. In terms of biological role, catalyzes the ferrous insertion into protoporphyrin IX. This is Ferrochelatase from Ectopseudomonas mendocina (strain ymp) (Pseudomonas mendocina).